A 345-amino-acid polypeptide reads, in one-letter code: NADH-ubiquinone oxidoreductase chain 2 (345 aa).

Helical transmembrane passes span 1–21, 25–45, 60–80, 113–133, 148–168, 191–211, 239–259, 274–294, and 324–344; these read MNPI…ILAM, HWVY…PIIS, FLIQ…NAYL, FWLP…IATW, LIPT…GGLG, VIII…YMIF, IITS…PMSG, HLTP…MFYL, and SSLS…PLLI.

The protein belongs to the complex I subunit 2 family.

It localises to the mitochondrion inner membrane. It carries out the reaction a ubiquinone + NADH + 5 H(+)(in) = a ubiquinol + NAD(+) + 4 H(+)(out). Its function is as follows. Core subunit of the mitochondrial membrane respiratory chain NADH dehydrogenase (Complex I) that is believed to belong to the minimal assembly required for catalysis. Complex I functions in the transfer of electrons from NADH to the respiratory chain. The immediate electron acceptor for the enzyme is believed to be ubiquinone. The sequence is that of NADH-ubiquinone oxidoreductase chain 2 (MT-ND2) from Varanus baritji (Black-spotted ridge-tailed monitor).